The chain runs to 612 residues: Elongation factor 4 (612 aa).

Residues 11 to 193 (KHIRNFSIIA…RIVTDVPAPS (183 aa)) enclose the tr-type G domain. Residues 23–28 (DHGKST) and 140–143 (NKVD) contribute to the GTP site.

Belongs to the TRAFAC class translation factor GTPase superfamily. Classic translation factor GTPase family. LepA subfamily.

It localises to the cell membrane. The enzyme catalyses GTP + H2O = GDP + phosphate + H(+). Functionally, required for accurate and efficient protein synthesis under certain stress conditions. May act as a fidelity factor of the translation reaction, by catalyzing a one-codon backward translocation of tRNAs on improperly translocated ribosomes. Back-translocation proceeds from a post-translocation (POST) complex to a pre-translocation (PRE) complex, thus giving elongation factor G a second chance to translocate the tRNAs correctly. Binds to ribosomes in a GTP-dependent manner. The protein is Elongation factor 4 of Lacticaseibacillus paracasei (strain ATCC 334 / BCRC 17002 / CCUG 31169 / CIP 107868 / KCTC 3260 / NRRL B-441) (Lactobacillus paracasei).